A 262-amino-acid chain; its full sequence is Small ribosomal subunit protein mS23 (262 aa).

The segment covering 242–254 (AAEEQETSLDDDA) has biased composition (acidic residues). The segment at 242-262 (AAEEQETSLDDDATEKVAVAA) is disordered.

Belongs to the mitochondrion-specific ribosomal protein mS23 family. In terms of assembly, component of the mitochondrial small ribosomal subunit.

The protein localises to the mitochondrion. The chain is Small ribosomal subunit protein mS23 (rsm25) from Aspergillus niger (strain ATCC MYA-4892 / CBS 513.88 / FGSC A1513).